The primary structure comprises 300 residues: NAD kinase (300 aa).

Aspartate 75 serves as the catalytic Proton acceptor. Residues 75–76, 149–150, arginine 177, aspartate 179, 190–195, alanine 214, and glutamine 248 contribute to the NAD(+) site; these read DG, ND, and TAYALS.

This sequence belongs to the NAD kinase family. The cofactor is a divalent metal cation.

The protein resides in the cytoplasm. It catalyses the reaction NAD(+) + ATP = ADP + NADP(+) + H(+). Functionally, involved in the regulation of the intracellular balance of NAD and NADP, and is a key enzyme in the biosynthesis of NADP. Catalyzes specifically the phosphorylation on 2'-hydroxyl of the adenosine moiety of NAD to yield NADP. This chain is NAD kinase, found in Burkholderia ambifaria (strain MC40-6).